Here is an 872-residue protein sequence, read N- to C-terminus: Alanine--tRNA ligase (872 aa).

Zn(2+) is bound by residues His-567, His-571, Cys-669, and His-673.

This sequence belongs to the class-II aminoacyl-tRNA synthetase family. The cofactor is Zn(2+).

Its subcellular location is the cytoplasm. It carries out the reaction tRNA(Ala) + L-alanine + ATP = L-alanyl-tRNA(Ala) + AMP + diphosphate. In terms of biological role, catalyzes the attachment of alanine to tRNA(Ala) in a two-step reaction: alanine is first activated by ATP to form Ala-AMP and then transferred to the acceptor end of tRNA(Ala). Also edits incorrectly charged Ser-tRNA(Ala) and Gly-tRNA(Ala) via its editing domain. The protein is Alanine--tRNA ligase of Streptococcus pneumoniae (strain Hungary19A-6).